A 36-amino-acid polypeptide reads, in one-letter code: Protein YmgL (36 aa).

This Escherichia coli (strain K12) protein is Protein YmgL.